The following is a 292-amino-acid chain: E3 ubiquitin-protein ligase RNF144A (292 aa).

The interval 16 to 236 (PLVSCKLCLG…YDKGPCRNKL (221 aa)) is TRIAD supradomain. Positions 20, 23, 43, 46, 111, 116, 135, 138, 143, 146, 151, 156, 185, and 188 each coordinate Zn(2+). Residues 20–70 (CKLCLGEYPAEQMTTIAQCQCIFCTLCLKQYVELLIKEGLETAISCPDAAC) form an RING-type 1 zinc finger. The segment at 91–156 (QRYKKLQFER…KARWHPGQGC (66 aa)) adopts an IBR-type zinc-finger fold. The RING-type 2; atypical zinc-finger motif lies at 185 to 214 (CPKCRVYIERDEGCAQMMCKNCKHAFCWYC). Cys-198 is a catalytic residue. Cys-203, Cys-206, Cys-211, Cys-214, His-226, and Cys-232 together coordinate Zn(2+). A helical membrane pass occupies residues 250–270 (VVGIFAGFGLLLLVASPFLLL).

Belongs to the RBR family. RNF144 subfamily. In terms of assembly, self-associates. Interacts with UBE2L3. In terms of processing, autoubiquitinated.

It is found in the cell membrane. It localises to the cytoplasmic vesicle membrane. It carries out the reaction [E2 ubiquitin-conjugating enzyme]-S-ubiquitinyl-L-cysteine + [acceptor protein]-L-lysine = [E2 ubiquitin-conjugating enzyme]-L-cysteine + [acceptor protein]-N(6)-ubiquitinyl-L-lysine.. The protein operates within protein modification; protein ubiquitination. In terms of biological role, E3 ubiquitin-protein ligase which accepts ubiquitin from E2 ubiquitin-conjugating enzymes UBE2L3 and UBE2L6 in the form of a thioester and then directly transfers the ubiquitin to targeted substrates. Mediates the ubiquitination and degradation of the DNA damage kinase PRKDC during DNA damage. Positively regulates DNA virus or exogenous cytosolic DNA-triggered innate immune response by mediating STING1 ubiquitination and increasing its 'Lys-6'-linked ubiquitination and translocation from the endoplasmic reticulum to the Golgi leading to downstream signaling pathways. Plays a positive role in EGF-dependent cell proliferation by prolonging EGF/EGFR signaling during EGF stimulation through EGFR ubiquitination. Increases ERK activity independently of EGFR signaling by promoting polyubiquitination and subsequent degradation of VRK3 in the cytosol. This chain is E3 ubiquitin-protein ligase RNF144A (Rnf144a), found in Mus musculus (Mouse).